We begin with the raw amino-acid sequence, 601 residues long: MEGADLLTAGVLFLFAAVAAVPLAARLGIGAVLGYLLAGIAIGPWGLGFISDVDEILHFSELGVVFLMFIIGLELNPSRLWQLRRSIFGVGAAQVLLSAAVLAGLLMLADFLWQAAVVGGIGLAMSSTAMALQLMREKGMNRSESGQLGFSVLLFQDLAVIPALALVPLLAGSADEHFDWFKVAMKVLAFAVMLIGGRYLLRPVFRFIAASGVREVFTAATLLLVLSAALFMDALGLSMALGTFIAGVLLAESEYRHELENAIDPFKGLLLGLFFISVGMSLNLGVLYTHLLWVAASVVILVVIKMLTLYLLARVYGIRSSERMQFASVLSQGGEFAFVLFSTASSQRLFQGDQMALLLVTVTLSMMTTPLLMKGIDKWLSRRLNGPEENDEKPWVEDDKPQVIVVGFGRFGQVIARLLMANKMRITVLERDIGAVNLMRKYGYKVYYGDATQVELLRSAGAEAAESIVITCNEPEDTMKLVALCQQHFPHLHILARARGRVEAHELLQAGVTQFSRETFSSALELGRKTLVSLGMHPHQAQRAQLHFRRLDMRMLRELIPEHSDMVQISRAREARRELEEIFQREMQQERRQLDGWDEFE.

Transmembrane regions (helical) follow at residues 4 to 24 (ADLL…VPLA), 29 to 49 (IGAV…GLGF), 55 to 75 (EILH…GLEL), 87 to 107 (IFGV…GLLM), 111 to 131 (FLWQ…TAMA), 152 to 172 (VLLF…LLAG), 177 to 197 (HFDW…LIGG), 207 to 227 (FIAA…LVLS), 230 to 250 (LFMD…GVLL), 262 to 282 (AIDP…GMSL), 284 to 304 (LGVL…LVVI), 324 to 344 (MQFA…FSTA), and 356 to 376 (ALLL…MKGI). The 120-residue stretch at 400–519 (KPQVIVVGFG…AGVTQFSRET (120 aa)) folds into the RCK N-terminal domain.

Belongs to the monovalent cation:proton antiporter 2 (CPA2) transporter (TC 2.A.37) family. KefB subfamily. In terms of assembly, interacts with the regulatory subunit KefG.

It is found in the cell inner membrane. Functionally, pore-forming subunit of a potassium efflux system that confers protection against electrophiles. Catalyzes K(+)/H(+) antiport. This chain is Glutathione-regulated potassium-efflux system protein KefB, found in Salmonella newport (strain SL254).